We begin with the raw amino-acid sequence, 254 residues long: Cobalt transport protein CbiM (254 aa).

The signal sequence occupies residues 1–31 (MKTILRPFTLLSRSIFLALFVLFLWSPDAHA). 6 helical membrane-spanning segments follow: residues 37–57 (GFLP…FLVV), 74–94 (LLLA…IPSV), 106–126 (LGAV…VLLF), 128–148 (ALLL…SMAI), 169–189 (WLAV…VTSL), and 212–232 (IFAL…VMVF).

This sequence belongs to the CbiM family. Forms an energy-coupling factor (ECF) transporter complex composed of an ATP-binding protein (A component, CbiO), a transmembrane protein (T component, CbiQ) and 2 possible substrate-capture proteins (S components, CbiM and CbiN) of unknown stoichimetry.

It localises to the cell inner membrane. It participates in cofactor biosynthesis; adenosylcobalamin biosynthesis. Functionally, part of the energy-coupling factor (ECF) transporter complex CbiMNOQ involved in cobalt import. This is Cobalt transport protein CbiM from Chlorobium limicola (strain DSM 245 / NBRC 103803 / 6330).